Here is a 104-residue protein sequence, read N- to C-terminus: Large ribosomal subunit protein uL24 (104 aa).

The protein belongs to the universal ribosomal protein uL24 family. In terms of assembly, part of the 50S ribosomal subunit.

One of two assembly initiator proteins, it binds directly to the 5'-end of the 23S rRNA, where it nucleates assembly of the 50S subunit. Its function is as follows. One of the proteins that surrounds the polypeptide exit tunnel on the outside of the subunit. The sequence is that of Large ribosomal subunit protein uL24 from Caulobacter vibrioides (strain ATCC 19089 / CIP 103742 / CB 15) (Caulobacter crescentus).